The primary structure comprises 57 residues: Protein new-glue 4 (57 aa).

An N-terminal signal peptide occupies residues 1 to 16 (MEWKLLLIVLPWLLVC).

Its subcellular location is the secreted. This is Protein new-glue 4 (ng4) from Drosophila melanogaster (Fruit fly).